The following is a 482-amino-acid chain: Probable cytosol aminopeptidase (482 aa).

K251 and D256 together coordinate Mn(2+). K263 is an active-site residue. Residues D274, D333, and E335 each contribute to the Mn(2+) site. The active site involves R337.

The protein belongs to the peptidase M17 family. It depends on Mn(2+) as a cofactor.

It localises to the cytoplasm. The catalysed reaction is Release of an N-terminal amino acid, Xaa-|-Yaa-, in which Xaa is preferably Leu, but may be other amino acids including Pro although not Arg or Lys, and Yaa may be Pro. Amino acid amides and methyl esters are also readily hydrolyzed, but rates on arylamides are exceedingly low.. It carries out the reaction Release of an N-terminal amino acid, preferentially leucine, but not glutamic or aspartic acids.. In terms of biological role, presumably involved in the processing and regular turnover of intracellular proteins. Catalyzes the removal of unsubstituted N-terminal amino acids from various peptides. The chain is Probable cytosol aminopeptidase from Acinetobacter baylyi (strain ATCC 33305 / BD413 / ADP1).